A 694-amino-acid chain; its full sequence is Putative bifunctional polynucleotide kinase/RNA ligase (694 aa).

Residues 1 to 385 (MLHVSRLLAN…TKQALNNKLA (385 aa)) form a ligase domain region. A bifunctional 5'-OH polynucleotide kinase/polynucleotide 3'-phosphatase region spans residues 394–694 (KQLLVLIGIS…FNVCRDYLEF (301 aa)). 401-408 (GISGSGKS) is an ATP binding site.

The enzyme catalyses a 5'-end dephospho-2'-deoxyribonucleoside-DNA + ATP = a 5'-end 5'-phospho-2'-deoxyribonucleoside-DNA + ADP + H(+). The catalysed reaction is ATP + (ribonucleotide)n-3'-hydroxyl + 5'-phospho-(ribonucleotide)m = (ribonucleotide)n+m + AMP + diphosphate.. Its function is as follows. Trifunctional enzyme that possesses a bifunctional polynucleotide kinase/phosphatase activity and an ATP-dependent RNA ligase activity. May therefore play a role to evade an RNA damage-based host response. The sequence is that of Putative bifunctional polynucleotide kinase/RNA ligase (PNK/PNL) from Autographa californica nuclear polyhedrosis virus (AcMNPV).